Consider the following 215-residue polypeptide: Nascent polypeptide-associated complex subunit alpha (215 aa).

A disordered region spans residues 1–81; that stretch reads MPGEATETVP…SEKKARKAMS (81 aa). The segment covering 9–28 has biased composition (polar residues); it reads VPATEQELPQPQAETGSGTE. Acidic residues predominate over residues 29–42; sequence SDSDESVPELEEQD. Serine 43 carries the phosphoserine; by ILK1 modification. Low complexity predominate over residues 44–57; the sequence is TQTATQQAQLAAAA. A required for DNA-binding region spans residues 69-80; the sequence is QSRSEKKARKAM. Positions 70–135 constitute an NAC-A/B domain; the sequence is SRSEKKARKA…AKIEDLSQQA (66 aa). Residues 93–108 are RNA/DNA-binding; sequence RVTIRKSKNILFVITK. Residue serine 132 is modified to Phosphoserine. Position 142 is an N6-acetyllysine; alternate (lysine 142). Residue lysine 142 forms a Glycyl lysine isopeptide (Lys-Gly) (interchain with G-Cter in SUMO2); alternate linkage. Threonine 159 bears the Phosphothreonine; by GSK3-beta mark. Phosphothreonine is present on threonine 161. Serine 166, serine 186, serine 191, and serine 203 each carry phosphoserine. The UBA domain maps to 176-213; it reads VEVKDIELVMSQANVSRAKAVRALKNNSNDIVNAIMEL.

This sequence belongs to the NAC-alpha family. Part of the nascent polypeptide-associated complex (NAC), which is a heterodimer of NACA and BTF3 (via NAC-A/B domains). NAC associates with ribosomes through the BTF3/NACB subunit and contacts the ribosomal protein L23, which is positioned near the exiting site. Both subunits can contact nascent polypeptide chains. NACA may also form homodimers, and only this form binds DNA. Interacts with TBP and JUN. In terms of processing, phosphorylation of Ser-43 by ILK during cell adhesion may promote nuclear localization. Phosphorylation of Thr-159 by GSK3B may promote proteasome mediated degradation. In terms of tissue distribution, isoform 1 appears to be ubiquitously expressed.

Its subcellular location is the cytoplasm. The protein localises to the nucleus. Its function is as follows. Prevents inappropriate targeting of non-secretory polypeptides to the endoplasmic reticulum (ER). Binds to nascent polypeptide chains as they emerge from the ribosome and blocks their interaction with the signal recognition particle (SRP), which normally targets nascent secretory peptides to the ER. Also reduces the inherent affinity of ribosomes for protein translocation sites in the ER membrane (M sites). Isoform 1 and isoform 2 appear to bind DNA and play roles in transcription. Isoform 1 may function as a specific coactivator for JUN, acting to stabilize the interaction of JUN homodimers with promoter elements. The protein is Nascent polypeptide-associated complex subunit alpha (Naca) of Mus musculus (Mouse).